Reading from the N-terminus, the 754-residue chain is MEINPYLMFLNNDVTSLISTTYPYTGPPPMSHGSSTKYTLETIKRTYDYSRTSVEKTSKVFNIPRRKFCNCLEDKDELVKPTGNVDISSLLGLAEMMEKRMGEGFFKHCVMEAETEILKMHFSRLTEGRQTYDWTSERNMPAATALQLTVDAIKETEGPFKGTTMLEYCNKMIEMLDWKEVKFRKVKTMVRREKDKRSGKEIKTKVPVMGIDSIKHDEFLIRALTINTMAKDGERGKLQRRAIATPGMIVRPFSKIVETVAQKICEKLKESGLPVGGNEKKAKLKTTVTSLNARMNSDQFAVNITGDNSKWNECQQPEAYLALLAYITKDSSDLMKDLCSVAPVLFCNKFVKLGQGIRLSNKRKTKEVIIKAEKMGKYKNLMREEYKNLFEPLEKYIQKDVCFLPGGMLMGMFNMLSTVLGVSTLCYMDEELKAKGCFWTGLQSSDDFVLFAVASNWSNIHWTIRRFNAVCKLIGINMSLEKSYGSLPELFEFTSMFFDGEFVSNLAMELPAFTTAGVNEGVDFTAAMSIIKTNMINNSLSPSTALMALRICLQEFRATYRVHPWDSRVKGGRMKIINEFIKTIENKDGLLIADGGKLMNNISTLHIPEEVLKFEKMDEQYRNRVFNPKNPFTNFDKTIDIFRAHGPIRVEENEAVVSTHSFRTRANRTLLNTDMRAMMAEEKRYQMVCDMFKSVFESADINPPIGAMSIGEAIEEKLLERAKMKRDIGAIEDSEYEEIKDIIRDAKKARIESR.

2 consecutive short sequence motifs (nuclear localization signal) follow at residues 189–197 (MVRREKDKR) and 205–218 (KVPV…KHDE). Residues 251-258 (RPFSKIVE) form a promoter-binding site region. One can recognise a RdRp catalytic domain in the interval 288–484 (VTSLNARMNS…GINMSLEKSY (197 aa)).

The protein belongs to the influenza viruses polymerase PB1 family. In terms of assembly, influenza RNA polymerase is composed of three subunits: PB1, PB2 and PA. Interacts (via N-terminus) with PA (via C-terminus). Interacts (via C-terminus) with PB2 (via N-terminus); this interaction is essential for transcription initiation. Phosphorylated by host PRKCA.

It localises to the host nucleus. The protein localises to the host cytoplasm. It catalyses the reaction RNA(n) + a ribonucleoside 5'-triphosphate = RNA(n+1) + diphosphate. RNA-dependent RNA polymerase which is responsible for replication and transcription of virus RNA segments. The transcription of viral mRNAs occurs by a unique mechanism called cap-snatching. 5' methylated caps of cellular mRNAs are cleaved after 10-13 nucleotides by PA. In turn, these short capped RNAs are used as primers by PB1 for transcription of viral mRNAs. During virus replication, PB1 initiates RNA synthesis and copy vRNA into complementary RNA (cRNA) which in turn serves as a template for the production of more vRNAs. The protein is RNA-directed RNA polymerase catalytic subunit of Influenza C virus (strain C/Ann Arbor/1/1950).